Consider the following 570-residue polypeptide: MFS-type transporter ptmT (570 aa).

Residues 1–11 (MPDSGNIQLDT) show a composition bias toward polar residues. Positions 1–34 (MPDSGNIQLDTLQHKDHSQETTSHYEGGSQLPEQ) are disordered. Transmembrane regions (helical) follow at residues 50–70 (GLIR…CVGL), 94–114 (WYVS…GKIY), 121–141 (WTYL…AITP), 151–171 (AISG…LSNI), 182–202 (AFIG…GGVF), 210–230 (WCFY…FLFM), 247–267 (GLDW…LLAL), 278–298 (NVRI…WLLI), 323–343 (IYTI…PIWF), 356–376 (IMNL…SVLI), 379–399 (VGYM…GAGL), 413–433 (IGYQ…PLLV), 445–465 (VATA…SAIA), and 517–537 (VTHT…GAFI). Residue N541 is glycosylated (N-linked (GlcNAc...) asparagine). The segment at 550-570 (PEPLVPGGSHSGAERDSKNGT) is disordered. Basic and acidic residues predominate over residues 561 to 570 (GAERDSKNGT).

This sequence belongs to the major facilitator superfamily. TCR/Tet family.

It is found in the cell membrane. MFS-type transporter; part of the gene cluster that mediates the biosynthesis of the indole diterpenes penitrems. May be involved in the efflux of penitrems. This Penicillium ochrochloron protein is MFS-type transporter ptmT.